A 424-amino-acid polypeptide reads, in one-letter code: MELSYRLFICLLLWGSTELCYPQPFWLLQGGASRAETSVQPVLVECREATLLVTVSKDLFGTGKLIRAADLTLGPEACEPLVSMDTEDVVRFEVGLHECGSSMQVTDDALVYSTFLLHDPRPVGNLSIVRTNRAEIPIECRYPRQGNVSSQAILPTWLPFRTTVFSEEKLTFSLRLMEENWNAEKRSPTFHLGDAAHLQAEIHTGSHVPLRLFVDHCVATPTPDQNASPYHTIVDFHGCLVDGLTDASSAFKVPRPGPDTLQFTVDVFHFANDSRNMIYITCHLKAIPAEQEPDELNKACSFSKSSNSWFPVEGPADICQCCSKGDCGTPSHSRRQPHVVSQWSRSASRNRRHVTEEADITVGPLIFLDRSADYEVEQWALPADTSVLLLGIGLAVVASLTLTAVILIFTRRWRTASRPVSASE.

A signal peptide spans 1–22 (MELSYRLFICLLLWGSTELCYP). At Q23 the chain carries Pyrrolidone carboxylic acid. The Extracellular segment spans residues 23–387 (QPFWLLQGGA…QWALPADTSV (365 aa)). The region spanning 45-307 (ECREATLLVT…KACSFSKSSN (263 aa)) is the ZP domain. 2 cysteine pairs are disulfide-bonded: C46/C140 and C78/C99. Residues N125 and N147 are each glycosylated (N-linked (GlcNAc...) asparagine). 3 O-linked (GalNAc...) threonine glycosylation sites follow: T156, T162, and T163. Intrachain disulfides connect C217/C282 and C239/C300. A glycan (N-linked (GlcNAc...) asparagine) is linked at N272. A propeptide spans 351-424 (RRHVTEEADI…TASRPVSASE (74 aa)) (removed in mature form). The helical transmembrane segment at 388–408 (LLLGIGLAVVASLTLTAVILI) threads the bilayer. Topologically, residues 409–424 (FTRRWRTASRPVSASE) are cytoplasmic.

The protein belongs to the ZP domain family. ZPC subfamily. Polymers of ZP2 and ZP3 organized into long filaments cross-linked by ZP1 homodimers. Interacts with ZP1 and ZP2. Proteolytically cleaved before the transmembrane segment to yield the secreted ectodomain incorporated in the zona pellucida. In terms of processing, N-glycosylated. Post-translationally, O-glycosylated; removal of O-linked glycans may play an important role in the post-fertilization block to polyspermy. In terms of tissue distribution, expressed in oocytes.

The protein localises to the zona pellucida. It localises to the cell membrane. Component of the zona pellucida, an extracellular matrix surrounding oocytes which mediates sperm binding, induction of the acrosome reaction and prevents post-fertilization polyspermy. The zona pellucida is composed of 3 to 4 glycoproteins, ZP1, ZP2, ZP3, and ZP4. ZP3 is essential for sperm binding and zona matrix formation. The protein is Zona pellucida sperm-binding protein 3 (ZP3) of Macaca radiata (Bonnet macaque).